Here is a 269-residue protein sequence, read N- to C-terminus: MTQATPQRIAIAGASGRMGQMLIEAVLDTEGVELAVALDRAGSPSIGQDAGAALGRPCGVTITDQLDALAQADCLIDFTRPEGTLQHLQACLRHDVKMVIGTTGFDSSGRAEIEVAAQKIAIVFAPNMSVGVNATLKLLDMAARILNSGYDVEIFEAHHRNKVDAPSGTALIMGETVASAWDVALPDVATWTRHGDTGVRKPGTIGFSVVRGGDIVGDHTVFFCGTGERIEISHRSSSRATYAQGAVRAARFLARQDNGLYDMQAVLGL.

NAD(+) is bound by residues 13-18 and Asp-39; that span reads GASGRM. Residue Arg-40 participates in NADP(+) binding. NAD(+) is bound by residues 101-103 and 125-128; these read GTT and APNM. Catalysis depends on His-158, which acts as the Proton donor/acceptor. His-159 contributes to the (S)-2,3,4,5-tetrahydrodipicolinate binding site. The Proton donor role is filled by Lys-162. 168-169 provides a ligand contact to (S)-2,3,4,5-tetrahydrodipicolinate; that stretch reads GT.

Belongs to the DapB family.

Its subcellular location is the cytoplasm. It catalyses the reaction (S)-2,3,4,5-tetrahydrodipicolinate + NAD(+) + H2O = (2S,4S)-4-hydroxy-2,3,4,5-tetrahydrodipicolinate + NADH + H(+). The catalysed reaction is (S)-2,3,4,5-tetrahydrodipicolinate + NADP(+) + H2O = (2S,4S)-4-hydroxy-2,3,4,5-tetrahydrodipicolinate + NADPH + H(+). Its pathway is amino-acid biosynthesis; L-lysine biosynthesis via DAP pathway; (S)-tetrahydrodipicolinate from L-aspartate: step 4/4. In terms of biological role, catalyzes the conversion of 4-hydroxy-tetrahydrodipicolinate (HTPA) to tetrahydrodipicolinate. This Bordetella bronchiseptica (strain ATCC BAA-588 / NCTC 13252 / RB50) (Alcaligenes bronchisepticus) protein is 4-hydroxy-tetrahydrodipicolinate reductase.